Consider the following 506-residue polypeptide: GTPase Der (506 aa).

EngA-type G domains lie at 3 to 166 and 218 to 391; these read PVVA…GEQL and IKIA…ACAT. GTP contacts are provided by residues 9–16, 56–60, 118–121, 224–231, 271–275, and 336–339; these read GRPNVGKS, DTGGI, NKTD, DTAGV, and NKWD. The KH-like domain maps to 392–476; the sequence is QKNSTSMLTR…PIRIQFQEGN (85 aa).

It belongs to the TRAFAC class TrmE-Era-EngA-EngB-Septin-like GTPase superfamily. EngA (Der) GTPase family. In terms of assembly, associates with the 50S ribosomal subunit.

GTPase that plays an essential role in the late steps of ribosome biogenesis. The protein is GTPase Der of Actinobacillus pleuropneumoniae serotype 7 (strain AP76).